Reading from the N-terminus, the 312-residue chain is Ribosomal RNA small subunit methyltransferase H (312 aa).

S-adenosyl-L-methionine is bound by residues 35-37 (GGH), Asp55, Phe79, Asp101, and Gln108.

The protein belongs to the methyltransferase superfamily. RsmH family.

It localises to the cytoplasm. The catalysed reaction is cytidine(1402) in 16S rRNA + S-adenosyl-L-methionine = N(4)-methylcytidine(1402) in 16S rRNA + S-adenosyl-L-homocysteine + H(+). In terms of biological role, specifically methylates the N4 position of cytidine in position 1402 (C1402) of 16S rRNA. This chain is Ribosomal RNA small subunit methyltransferase H, found in Buchnera aphidicola subsp. Acyrthosiphon pisum (strain APS) (Acyrthosiphon pisum symbiotic bacterium).